Reading from the N-terminus, the 339-residue chain is Biotin synthase (339 aa).

One can recognise a Radical SAM core domain in the interval N55–R282. 3 residues coordinate [4Fe-4S] cluster: C70, C74, and C77. Positions 114, 145, 205, and 277 each coordinate [2Fe-2S] cluster.

This sequence belongs to the radical SAM superfamily. Biotin synthase family. Homodimer. Requires [4Fe-4S] cluster as cofactor. [2Fe-2S] cluster serves as cofactor.

It catalyses the reaction (4R,5S)-dethiobiotin + (sulfur carrier)-SH + 2 reduced [2Fe-2S]-[ferredoxin] + 2 S-adenosyl-L-methionine = (sulfur carrier)-H + biotin + 2 5'-deoxyadenosine + 2 L-methionine + 2 oxidized [2Fe-2S]-[ferredoxin]. It participates in cofactor biosynthesis; biotin biosynthesis; biotin from 7,8-diaminononanoate: step 2/2. Functionally, catalyzes the conversion of dethiobiotin (DTB) to biotin by the insertion of a sulfur atom into dethiobiotin via a radical-based mechanism. This is Biotin synthase from Burkholderia ambifaria (strain MC40-6).